Here is a 144-residue protein sequence, read N- to C-terminus: D-aminoacyl-tRNA deacylase (144 aa).

A Gly-cisPro motif, important for rejection of L-amino acids motif is present at residues 136 to 137; the sequence is GP.

This sequence belongs to the DTD family. As to quaternary structure, homodimer.

The protein resides in the cytoplasm. It catalyses the reaction glycyl-tRNA(Ala) + H2O = tRNA(Ala) + glycine + H(+). It carries out the reaction a D-aminoacyl-tRNA + H2O = a tRNA + a D-alpha-amino acid + H(+). An aminoacyl-tRNA editing enzyme that deacylates mischarged D-aminoacyl-tRNAs. Also deacylates mischarged glycyl-tRNA(Ala), protecting cells against glycine mischarging by AlaRS. Acts via tRNA-based rather than protein-based catalysis; rejects L-amino acids rather than detecting D-amino acids in the active site. By recycling D-aminoacyl-tRNA to D-amino acids and free tRNA molecules, this enzyme counteracts the toxicity associated with the formation of D-aminoacyl-tRNA entities in vivo and helps enforce protein L-homochirality. The polypeptide is D-aminoacyl-tRNA deacylase (Haemophilus influenzae (strain PittGG)).